The sequence spans 474 residues: Glutamate--tRNA ligase (474 aa).

The 'HIGH' region motif lies at 11–21 (PSPTGFLHIGG). Residues 240 to 244 (KLSKR) carry the 'KMSKS' region motif. Lysine 243 provides a ligand contact to ATP.

Belongs to the class-I aminoacyl-tRNA synthetase family. Glutamate--tRNA ligase type 1 subfamily. In terms of assembly, monomer.

Its subcellular location is the cytoplasm. It carries out the reaction tRNA(Glu) + L-glutamate + ATP = L-glutamyl-tRNA(Glu) + AMP + diphosphate. In terms of biological role, catalyzes the attachment of glutamate to tRNA(Glu) in a two-step reaction: glutamate is first activated by ATP to form Glu-AMP and then transferred to the acceptor end of tRNA(Glu). This is Glutamate--tRNA ligase from Nitrobacter hamburgensis (strain DSM 10229 / NCIMB 13809 / X14).